The sequence spans 255 residues: Triosephosphate isomerase (255 aa).

A substrate-binding site is contributed by 9–11; that stretch reads NWK. Residue His-95 is the Electrophile of the active site. The Proton acceptor role is filled by Glu-167. Residues Gly-173, Ser-212, and 233-234 each bind substrate; that span reads GG.

This sequence belongs to the triosephosphate isomerase family. As to quaternary structure, homodimer.

It localises to the cytoplasm. The enzyme catalyses D-glyceraldehyde 3-phosphate = dihydroxyacetone phosphate. It functions in the pathway carbohydrate biosynthesis; gluconeogenesis. Its pathway is carbohydrate degradation; glycolysis; D-glyceraldehyde 3-phosphate from glycerone phosphate: step 1/1. In terms of biological role, involved in the gluconeogenesis. Catalyzes stereospecifically the conversion of dihydroxyacetone phosphate (DHAP) to D-glyceraldehyde-3-phosphate (G3P). This is Triosephosphate isomerase from Klebsiella pneumoniae.